Reading from the N-terminus, the 469-residue chain is Biotin synthase (469 aa).

The Radical SAM core domain maps to 51-278 (MTVKVNYLVN…DKEIRMAGGR (228 aa)). The [4Fe-4S] cluster site is built by Cys66, Cys70, and Cys73. Residues Cys110, Cys143, Cys203, and Arg273 each coordinate [2Fe-2S] cluster. The tract at residues 326–469 (AGPDPSRDRH…GAGTSVAPNA (144 aa)) is disordered. Low complexity-rich tracts occupy residues 363-384 (GSAAGSSSGDGSAPDGGRAPAD) and 405-428 (AGGPARTRSAAASSAPTGAGMSPA).

The protein belongs to the radical SAM superfamily. Biotin synthase family. In terms of assembly, homodimer. [4Fe-4S] cluster serves as cofactor. The cofactor is [2Fe-2S] cluster.

The catalysed reaction is (4R,5S)-dethiobiotin + (sulfur carrier)-SH + 2 reduced [2Fe-2S]-[ferredoxin] + 2 S-adenosyl-L-methionine = (sulfur carrier)-H + biotin + 2 5'-deoxyadenosine + 2 L-methionine + 2 oxidized [2Fe-2S]-[ferredoxin]. It participates in cofactor biosynthesis; biotin biosynthesis; biotin from 7,8-diaminononanoate: step 2/2. In terms of biological role, catalyzes the conversion of dethiobiotin (DTB) to biotin by the insertion of a sulfur atom into dethiobiotin via a radical-based mechanism. This chain is Biotin synthase, found in Kocuria rhizophila (strain ATCC 9341 / DSM 348 / NBRC 103217 / DC2201).